The chain runs to 217 residues: Probable transaldolase (217 aa).

The active-site Schiff-base intermediate with substrate is the K83.

Belongs to the transaldolase family. Type 3B subfamily.

The protein resides in the cytoplasm. It carries out the reaction D-sedoheptulose 7-phosphate + D-glyceraldehyde 3-phosphate = D-erythrose 4-phosphate + beta-D-fructose 6-phosphate. The protein operates within carbohydrate degradation; pentose phosphate pathway; D-glyceraldehyde 3-phosphate and beta-D-fructose 6-phosphate from D-ribose 5-phosphate and D-xylulose 5-phosphate (non-oxidative stage): step 2/3. Transaldolase is important for the balance of metabolites in the pentose-phosphate pathway. This chain is Probable transaldolase, found in Chelativorans sp. (strain BNC1).